A 224-amino-acid polypeptide reads, in one-letter code: Oxalate oxidase GF-2.8 (224 aa).

The N-terminal stretch at 1–23 (MGYSKTLVAGLFAMLLLAPAVLA) is a signal peptide. A disulfide bridge connects residues cysteine 33 and cysteine 49. Positions 63–214 (SKLAKAGNTS…ALRVEARVVE (152 aa)) constitute a Cupin type-1 domain. Asparagine 70 and asparagine 75 each carry an N-linked (GlcNAc...) asparagine glycan. Mn(2+) contacts are provided by histidine 111, histidine 113, glutamate 118, and histidine 160.

It belongs to the germin family. As to quaternary structure, oligomer (believed to be a pentamer but probably hexamer).

It localises to the secreted. Its subcellular location is the extracellular space. The protein resides in the apoplast. It is found in the cytoplasm. The protein localises to the cell wall. It catalyses the reaction oxalate + O2 + 2 H(+) = H2O2 + 2 CO2. In terms of biological role, produces developmental and stress-related release of hydrogen peroxide in the apoplast. May play an important role in several aspects of plant growth and defense mechanisms. This Triticum aestivum (Wheat) protein is Oxalate oxidase GF-2.8.